Consider the following 91-residue polypeptide: Small ribosomal subunit protein uS19 (91 aa).

It belongs to the universal ribosomal protein uS19 family.

Protein S19 forms a complex with S13 that binds strongly to the 16S ribosomal RNA. This chain is Small ribosomal subunit protein uS19, found in Pseudomonas fluorescens (strain Pf0-1).